The sequence spans 738 residues: DNA topoisomerase 4 subunit A (738 aa).

A Topo IIA-type catalytic domain is found at 32-496 (LPDVRDGLKP…SFEEVTLTNQ (465 aa)). Y120 (O-(5'-phospho-DNA)-tyrosine intermediate) is an active-site residue.

Belongs to the type II topoisomerase GyrA/ParC subunit family. ParC type 1 subfamily. In terms of assembly, heterotetramer composed of ParC and ParE.

The protein resides in the cell membrane. It catalyses the reaction ATP-dependent breakage, passage and rejoining of double-stranded DNA.. Topoisomerase IV is essential for chromosome segregation. It relaxes supercoiled DNA. Performs the decatenation events required during the replication of a circular DNA molecule. The polypeptide is DNA topoisomerase 4 subunit A (Rickettsia conorii (strain ATCC VR-613 / Malish 7)).